The following is a 332-amino-acid chain: T-cell surface glycoprotein CD1c2 (332 aa).

Positions 1 to 17 (MLFLQFLFVDVVLGGSI) are cleaved as a signal peptide. Over 18–300 (TENVVQENIS…IILYWGHGLS (283 aa)) the chain is Extracellular. Asparagine 25, asparagine 38, and asparagine 75 each carry an N-linked (GlcNAc...) asparagine glycan. Cystine bridges form between cysteine 120-cysteine 184 and cysteine 224-cysteine 279. The region spanning 205-292 (PEVWLSSSPN…HSSLRDQDII (88 aa)) is the Ig-like domain. Residues 301–321 (VILIALAVIVPLVLLIVLVLL) form a helical membrane-spanning segment. At 322 to 332 (CKKRCTYQGIP) the chain is on the cytoplasmic side.

As to quaternary structure, heterodimer with B2M (beta-2-microglobulin).

It is found in the cell membrane. Its subcellular location is the endosome membrane. Functionally, antigen-presenting protein that binds self and non-self lipid and glycolipid antigens and presents them to T-cell receptors on natural killer T-cells. The sequence is that of T-cell surface glycoprotein CD1c2 (CD1C2) from Cavia porcellus (Guinea pig).